A 357-amino-acid polypeptide reads, in one-letter code: Protein FAM118A (357 aa).

The residue at position 1 (Met-1) is an N-acetylmethionine. Residues 30 to 46 traverse the membrane as a helical segment; the sequence is LLLVIGTGVSAAVAPGI. Ser-311 is modified (phosphoserine).

It belongs to the FAM118 family.

Its subcellular location is the membrane. In Mus musculus (Mouse), this protein is Protein FAM118A (Fam118a).